The chain runs to 457 residues: Argininosuccinate lyase (457 aa).

The protein belongs to the lyase 1 family. Argininosuccinate lyase subfamily.

Its subcellular location is the cytoplasm. The enzyme catalyses 2-(N(omega)-L-arginino)succinate = fumarate + L-arginine. It functions in the pathway amino-acid biosynthesis; L-arginine biosynthesis; L-arginine from L-ornithine and carbamoyl phosphate: step 3/3. This chain is Argininosuccinate lyase, found in Yersinia pseudotuberculosis serotype IB (strain PB1/+).